We begin with the raw amino-acid sequence, 314 residues long: Olfactory receptor 1E5 (314 aa).

Over 1-25 (MMGQNQTSISDFLLLGLPIQPEQQN) the chain is Extracellular. Asn5 carries N-linked (GlcNAc...) asparagine glycosylation. The helical transmembrane segment at 26 to 49 (LCYALFLAMYLTTLLGNLLIIVLI) threads the bilayer. The Cytoplasmic segment spans residues 50–57 (RLDSHLHT). A helical membrane pass occupies residues 58-79 (PMYLFLSNLSFSDLCFSSVTIP). The Extracellular segment spans residues 80-100 (KLLQNMQNQDPSIPYADCLTQ). An intrachain disulfide couples Cys97 to Cys189. Residues 101–120 (MYFFLLFGDLESFLLVAMAY) traverse the membrane as a helical segment. At 121–139 (DRYVAICFPLHYTAIMSPM) the chain is on the cytoplasmic side. Residues 140-158 (LCLSLVALSWVLTTFHAML) traverse the membrane as a helical segment. Topologically, residues 159 to 196 (HTLLMARLCFCADNVIPHFFCDMSALLKLACSDTRVNE) are extracellular. The chain crosses the membrane as a helical span at residues 197–219 (WVIFIMGGLIVVIPFLLILGSYA). At 220 to 236 (RIVSSILKVPSSKGICK) the chain is on the cytoplasmic side. The helical transmembrane segment at 237 to 260 (AFSTCGSHLSVVSLFYGTIIGLYL) threads the bilayer. Residues 261–272 (CPSANSSTLKET) lie on the Extracellular side of the membrane. Asn265 is a glycosylation site (N-linked (GlcNAc...) asparagine). Residues 273–292 (VMAMMYTVVTPMLNPFIYSL) traverse the membrane as a helical segment. Residues 293–314 (RNRDMKGALERVIXKRKNPFLL) are Cytoplasmic-facing.

The protein belongs to the G-protein coupled receptor 1 family.

It is found in the cell membrane. In terms of biological role, odorant receptor. In Pan troglodytes (Chimpanzee), this protein is Olfactory receptor 1E5 (OR1E5).